The following is a 428-amino-acid chain: tRNA(Ile2) 2-agmatinylcytidine synthetase TiaS (428 aa).

This sequence belongs to the TiaS family.

Its subcellular location is the cytoplasm. It carries out the reaction cytidine(34) in tRNA(Ile2) + agmatine + ATP + H2O = 2-agmatinylcytidine(34) in tRNA(Ile2) + AMP + 2 phosphate + 2 H(+). Its function is as follows. ATP-dependent agmatine transferase that catalyzes the formation of 2-agmatinylcytidine (agm2C) at the wobble position (C34) of tRNA(Ile2), converting the codon specificity from AUG to AUA. The sequence is that of tRNA(Ile2) 2-agmatinylcytidine synthetase TiaS from Methanosarcina mazei (strain ATCC BAA-159 / DSM 3647 / Goe1 / Go1 / JCM 11833 / OCM 88) (Methanosarcina frisia).